We begin with the raw amino-acid sequence, 450 residues long: Protein tweety homolog 1 (450 aa).

The Extracellular segment spans residues 1–43 (MGAPPGYRPSAWVHLLHQLPRADFQLRPVPSGFAPRDQEYQQA). The chain crosses the membrane as a helical span at residues 44-64 (LLLVAALAGLGLGLSLIFIAV). Residues 65-88 (YLIRFCCCRPPEPPGAKSPPPGGG) lie on the Cytoplasmic side of the membrane. Residues 89-109 (CVTWSCIAALLVGCAGIGIGF) form a helical membrane-spanning segment. Over 110-214 (YGNSETSDGV…DVTFVEEYRW (105 aa)) the chain is Extracellular. N-linked (GlcNAc...) asparagine glycosylation is present at asparagine 130. The helical transmembrane segment at 215 to 235 (LAYVLLLLLVLLVCLFTLLGL) threads the bilayer. Residues 236–240 (AKQSK) lie on the Cytoplasmic side of the membrane. The chain crosses the membrane as a helical span at residues 241–261 (WLVVVMTAMSLLVLVLSWGSM). At 262 to 390 (GLEAATAVGL…LRGLCEDALE (129 aa)) the chain is on the extracellular side. Cystine bridges form between cysteine 275–cysteine 385 and cysteine 303–cysteine 370. Asparagine 284 and asparagine 355 each carry an N-linked (GlcNAc...) asparagine glycan. Residues 391–411 (GLLFLMLFSLLSAGALATTLC) form a helical membrane-spanning segment. Residues 412-450 (SLPRAWALFPPSDDYDDTDDDDPFNPQESKRFVQWQSSI) lie on the Cytoplasmic side of the membrane. Residues 428-450 (DTDDDDPFNPQESKRFVQWQSSI) form a disordered region. Position 440 is a phosphoserine (serine 440).

This sequence belongs to the tweety family. As to quaternary structure, homotetramer; disulfide-linked. Homodimer. N-glycosylated. Contains high-mannose, hybrid and complex oligosaccharides.

It localises to the cell membrane. It catalyses the reaction chloride(in) = chloride(out). The enzyme catalyses L-glutamate(out) = L-glutamate(in). In terms of biological role, calcium-independent, swelling-dependent volume-regulated anion channel (VRAC-swell) which plays a pivotal role in the process of regulatory volume decrease (RVD) in the brain through the efflux of anions like chloride and organic osmolytes like glutamate. In Rattus norvegicus (Rat), this protein is Protein tweety homolog 1 (Ttyh1).